The following is a 116-amino-acid chain: Phosphoribosyl-AMP cyclohydrolase (116 aa).

A Mg(2+)-binding site is contributed by Asp-85. Cys-86 contributes to the Zn(2+) binding site. Positions 87 and 89 each coordinate Mg(2+). Cys-102 and Cys-109 together coordinate Zn(2+).

Belongs to the PRA-CH family. Homodimer. Mg(2+) serves as cofactor. The cofactor is Zn(2+).

The protein resides in the cytoplasm. The enzyme catalyses 1-(5-phospho-beta-D-ribosyl)-5'-AMP + H2O = 1-(5-phospho-beta-D-ribosyl)-5-[(5-phospho-beta-D-ribosylamino)methylideneamino]imidazole-4-carboxamide. It participates in amino-acid biosynthesis; L-histidine biosynthesis; L-histidine from 5-phospho-alpha-D-ribose 1-diphosphate: step 3/9. Functionally, catalyzes the hydrolysis of the adenine ring of phosphoribosyl-AMP. This is Phosphoribosyl-AMP cyclohydrolase from Corynebacterium diphtheriae (strain ATCC 700971 / NCTC 13129 / Biotype gravis).